Reading from the N-terminus, the 559-residue chain is Dihydroxy-acid dehydratase 2 (559 aa).

Cys53 is a [2Fe-2S] cluster binding site. Asp85 is a Mg(2+) binding site. Residue Cys126 participates in [2Fe-2S] cluster binding. Residues Asp127 and Lys128 each coordinate Mg(2+). Lys128 carries the N6-carboxylysine modification. A [2Fe-2S] cluster-binding site is contributed by Cys195. Residue Glu446 coordinates Mg(2+). Residue Ser472 is the Proton acceptor of the active site.

It belongs to the IlvD/Edd family. As to quaternary structure, homodimer. [2Fe-2S] cluster is required as a cofactor. The cofactor is Mg(2+).

The catalysed reaction is (2R)-2,3-dihydroxy-3-methylbutanoate = 3-methyl-2-oxobutanoate + H2O. It catalyses the reaction (2R,3R)-2,3-dihydroxy-3-methylpentanoate = (S)-3-methyl-2-oxopentanoate + H2O. It participates in amino-acid biosynthesis; L-isoleucine biosynthesis; L-isoleucine from 2-oxobutanoate: step 3/4. It functions in the pathway amino-acid biosynthesis; L-valine biosynthesis; L-valine from pyruvate: step 3/4. Its function is as follows. Functions in the biosynthesis of branched-chain amino acids. Catalyzes the dehydration of (2R,3R)-2,3-dihydroxy-3-methylpentanoate (2,3-dihydroxy-3-methylvalerate) into 2-oxo-3-methylpentanoate (2-oxo-3-methylvalerate) and of (2R)-2,3-dihydroxy-3-methylbutanoate (2,3-dihydroxyisovalerate) into 2-oxo-3-methylbutanoate (2-oxoisovalerate), the penultimate precursor to L-isoleucine and L-valine, respectively. The chain is Dihydroxy-acid dehydratase 2 from Pseudoalteromonas translucida (strain TAC 125).